We begin with the raw amino-acid sequence, 155 residues long: Arginine repressor (155 aa).

The protein belongs to the ArgR family.

It localises to the cytoplasm. It functions in the pathway amino-acid biosynthesis; L-arginine biosynthesis [regulation]. Its function is as follows. Regulates arginine biosynthesis genes. The sequence is that of Arginine repressor from Mannheimia succiniciproducens (strain KCTC 0769BP / MBEL55E).